The sequence spans 386 residues: NADPH-dependent alkenal/one oxidoreductase, chloroplastic (386 aa).

It belongs to the zinc-containing alcohol dehydrogenase family. Quinone oxidoreductase subfamily.

The protein localises to the plastid. It localises to the chloroplast. In terms of biological role, reduces the double bond in short-chain unsaturated carbonyls. Acts preferentially on alpha,beta-unsaturated ketones rather on alpha,beta-unsaturated aldehydes. Has no activity with (E)-2-hexenal and (E)-2-pentenal. Contributes to detoxify stromal reactive carbonyls produced under oxidative stress. This chain is NADPH-dependent alkenal/one oxidoreductase, chloroplastic, found in Arabidopsis thaliana (Mouse-ear cress).